A 482-amino-acid polypeptide reads, in one-letter code: Transcription initiation factor IIE subunit alpha (482 aa).

In terms of domain architecture, HTH TFE/IIEalpha-type spans 9–99 (VKNLLKFVVR…KYPHAIDAIK (91 aa)). The C4-type zinc-finger motif lies at 124 to 152 (CPICLTKYTQLEAVQLLNFDRTEFLCSLC). The segment covering 274-286 (RELQERQAEEKRK) has biased composition (basic and acidic residues). Disordered regions lie at residues 274-295 (RELQ…EWHK) and 321-482 (AMDS…FEDV). Over residues 321–345 (AMDSINPDNEPAQETSYQNNRTLTE) the composition is skewed to polar residues. Acidic residues predominate over residues 374 to 401 (EEEEEEEEEEDEEEEEEEEMEDVMDDND). Over residues 419–432 (TAGTAKTESNTSND) the composition is skewed to polar residues. Basic and acidic residues predominate over residues 433-444 (VKQESINDKTED). The span at 464–482 (GDDDDDDDDDEMDIEFEDV) shows a compositional bias: acidic residues.

It belongs to the TFIIE alpha subunit family. As to quaternary structure, TFIIE is a tetramer of two alpha (TFA1) and two beta (TFA2) subunits.

The protein resides in the nucleus. Its function is as follows. Recruits TFIIH to the initiation complex and stimulates the RNA polymerase II C-terminal domain kinase and DNA-dependent ATPase activities of TFIIH. Both TFIIH and TFIIE are required for promoter clearance by RNA polymerase. The polypeptide is Transcription initiation factor IIE subunit alpha (TFA1) (Saccharomyces cerevisiae (strain ATCC 204508 / S288c) (Baker's yeast)).